A 345-amino-acid polypeptide reads, in one-letter code: Phosphate acyltransferase (345 aa).

It belongs to the PlsX family. In terms of assembly, homodimer. Probably interacts with PlsY.

It is found in the cytoplasm. It carries out the reaction a fatty acyl-[ACP] + phosphate = an acyl phosphate + holo-[ACP]. Its pathway is lipid metabolism; phospholipid metabolism. Catalyzes the reversible formation of acyl-phosphate (acyl-PO(4)) from acyl-[acyl-carrier-protein] (acyl-ACP). This enzyme utilizes acyl-ACP as fatty acyl donor, but not acyl-CoA. The chain is Phosphate acyltransferase from Wolbachia pipientis subsp. Culex pipiens (strain wPip).